The sequence spans 643 residues: Threonine--tRNA ligase (643 aa).

The TGS domain occupies 1-61; the sequence is MIKITLKDGS…NEDSSLEICT (61 aa). The catalytic stretch occupies residues 240-540; the sequence is DHNKLGRELG…LIEKYAGALP (301 aa). Zn(2+) contacts are provided by C335, H386, and H517.

It belongs to the class-II aminoacyl-tRNA synthetase family. In terms of assembly, homodimer. Zn(2+) is required as a cofactor.

It localises to the cytoplasm. It carries out the reaction tRNA(Thr) + L-threonine + ATP = L-threonyl-tRNA(Thr) + AMP + diphosphate + H(+). In terms of biological role, catalyzes the attachment of threonine to tRNA(Thr) in a two-step reaction: L-threonine is first activated by ATP to form Thr-AMP and then transferred to the acceptor end of tRNA(Thr). Also edits incorrectly charged L-seryl-tRNA(Thr). The chain is Threonine--tRNA ligase from Clostridium perfringens (strain ATCC 13124 / DSM 756 / JCM 1290 / NCIMB 6125 / NCTC 8237 / Type A).